We begin with the raw amino-acid sequence, 139 residues long: 6,7-dimethyl-8-ribityllumazine synthase (139 aa).

5-amino-6-(D-ribitylamino)uracil-binding positions include Phe11, 42-44, and 66-68; these read ALE and VVI. Position 71–72 (71–72) interacts with (2S)-2-hydroxy-3-oxobutyl phosphate; sequence ET. His74 functions as the Proton donor in the catalytic mechanism. Asn98 is a 5-amino-6-(D-ribitylamino)uracil binding site. Arg112 contributes to the (2S)-2-hydroxy-3-oxobutyl phosphate binding site.

It belongs to the DMRL synthase family.

It carries out the reaction (2S)-2-hydroxy-3-oxobutyl phosphate + 5-amino-6-(D-ribitylamino)uracil = 6,7-dimethyl-8-(1-D-ribityl)lumazine + phosphate + 2 H2O + H(+). Its pathway is cofactor biosynthesis; riboflavin biosynthesis; riboflavin from 2-hydroxy-3-oxobutyl phosphate and 5-amino-6-(D-ribitylamino)uracil: step 1/2. Catalyzes the formation of 6,7-dimethyl-8-ribityllumazine by condensation of 5-amino-6-(D-ribitylamino)uracil with 3,4-dihydroxy-2-butanone 4-phosphate. This is the penultimate step in the biosynthesis of riboflavin. This chain is 6,7-dimethyl-8-ribityllumazine synthase, found in Novosphingobium aromaticivorans (strain ATCC 700278 / DSM 12444 / CCUG 56034 / CIP 105152 / NBRC 16084 / F199).